A 230-amino-acid polypeptide reads, in one-letter code: MVRDTRNVDLERGLELCKPEKVNKQNLFTNIVKPQKDKINIKTDKIKFFLNNLFTEFSKFHDSCYPDGRISTRSKLRWPLLIIWCILIVFAIDKNFEVKDFLSIWINESFINENRFYSEIWGPIAIYICLFILLLLGLIYCSKIVVKAIPLISIVIAAVVVIIAVAMVKILYICHWLIYKILILAFGIKVKPLGDTLPTHNGETGSHSKATVGSDIEQIEFQNMPTPVKK.

Transmembrane regions (helical) follow at residues 78–98, 120–140, and 148–168; these read WPLL…NFEV, IWGP…GLIY, and AIPL…VAMV.

Belongs to the UPF0494 family.

Its subcellular location is the vacuole. The protein resides in the membrane. The chain is UPF0494 membrane protein C1348.07 from Schizosaccharomyces pombe (strain 972 / ATCC 24843) (Fission yeast).